The primary structure comprises 304 residues: Glycine--tRNA ligase alpha subunit (304 aa).

The protein belongs to the class-II aminoacyl-tRNA synthetase family. Tetramer of two alpha and two beta subunits.

It is found in the cytoplasm. The catalysed reaction is tRNA(Gly) + glycine + ATP = glycyl-tRNA(Gly) + AMP + diphosphate. This chain is Glycine--tRNA ligase alpha subunit, found in Yersinia pseudotuberculosis serotype O:1b (strain IP 31758).